We begin with the raw amino-acid sequence, 76 residues long: ISLLTDFCIGFHSTQGWELMIGSVYKDFGFTPNDQILSCLVSIFPVILDTIFKYSIFRYLNRVSPSLVVIYHSMKE.

Residues 35 to 52 (QILSCLVSIFPVILDTIF) traverse the membrane as a helical segment.

This sequence belongs to the CemA family.

The protein localises to the plastid. The protein resides in the chloroplast inner membrane. It carries out the reaction K(+)(in) + H(+)(out) = K(+)(out) + H(+)(in). Functionally, contributes to K(+)/H(+) antiport activity by supporting proton efflux to control proton extrusion and homeostasis in chloroplasts in a light-dependent manner to modulate photosynthesis. Prevents excessive induction of non-photochemical quenching (NPQ) under continuous-light conditions. Indirectly promotes efficient inorganic carbon uptake into chloroplasts. The protein is Potassium/proton antiporter CemA of Vicia faba (Broad bean).